Consider the following 115-residue polypeptide: Protein TrbA (115 aa).

The next 4 helical transmembrane spans lie at 5 to 25 (YLKM…GYFF), 39 to 59 (LVFL…LWFL), 60 to 80 (CGAI…AALP), and 91 to 111 (IFIC…FIRG).

It localises to the cell membrane. This chain is Protein TrbA (trbA), found in Escherichia coli (strain K12).